A 318-amino-acid chain; its full sequence is Melanoma-associated antigen 8 (318 aa).

The interval 1 to 103 (MLLGQKSQRY…GPSTSPDPAH (103 aa)) is disordered. In terms of domain architecture, MAGE spans 112-311 (LDEKVAELVR…ISYPSLHEEA (200 aa)).

Expressed in many tumors of several types, such as melanoma, head and neck squamous cell carcinoma, lung carcinoma and breast carcinoma, but not in normal tissues except for testis and placenta.

Not known, though may play a role in embryonal development and tumor transformation or aspects of tumor progression. In Homo sapiens (Human), this protein is Melanoma-associated antigen 8 (MAGEA8).